A 524-amino-acid polypeptide reads, in one-letter code: Rho guanine nucleotide exchange factor 3 (524 aa).

Phosphoserine is present on residues S46 and S69. The 183-residue stretch at K121–K303 folds into the DH domain. The PH domain maps to I290–E448. A disordered region spans residues D461–V524. The segment covering E472 to Q484 has biased composition (basic and acidic residues).

As to quaternary structure, interacts with RHOA and RHOB.

Its subcellular location is the cytoplasm. Functionally, acts as a guanine nucleotide exchange factor (GEF) for RhoA and RhoB GTPases. This is Rho guanine nucleotide exchange factor 3 (Arhgef3) from Mus musculus (Mouse).